The chain runs to 105 residues: Intracellular chorismate mutase (105 aa).

The 83-residue stretch at 23–105 folds into the Chorismate mutase domain; sequence SQPVPEIDTL…LRLGRGRLGH (83 aa). 3 residues coordinate chorismate: Arg-61, Val-70, and Glu-74.

As to quaternary structure, homodimer. Interacts with AroG.

Its subcellular location is the cytoplasm. The enzyme catalyses chorismate = prephenate. It participates in metabolic intermediate biosynthesis; prephenate biosynthesis; prephenate from chorismate: step 1/1. With respect to regulation, the formation of the complex with AroG activates the chorismate mutase activity. In terms of biological role, catalyzes the Claisen rearrangement of chorismate to prephenate. Probably involved in the aromatic amino acid biosynthesis. This chain is Intracellular chorismate mutase, found in Mycobacterium bovis (strain ATCC BAA-935 / AF2122/97).